We begin with the raw amino-acid sequence, 357 residues long: UPF0283 membrane protein HSM_0945 (357 aa).

The next 3 helical transmembrane spans lie at 67–87, 96–116, and 213–233; these read LMAT…QWLV, IAFV…GTII, and AVES…MFFI.

Belongs to the UPF0283 family.

It is found in the cell inner membrane. The chain is UPF0283 membrane protein HSM_0945 from Histophilus somni (strain 2336) (Haemophilus somnus).